A 167-amino-acid polypeptide reads, in one-letter code: SsrA-binding protein (167 aa).

Residues 139–167 are disordered; that stretch reads QAHDKRHAEKEREWQRDKQRIMRAHNRNA. Residues 144-158 are compositionally biased toward basic and acidic residues; the sequence is RHAEKEREWQRDKQR.

It belongs to the SmpB family.

Its subcellular location is the cytoplasm. Its function is as follows. Required for rescue of stalled ribosomes mediated by trans-translation. Binds to transfer-messenger RNA (tmRNA), required for stable association of tmRNA with ribosomes. tmRNA and SmpB together mimic tRNA shape, replacing the anticodon stem-loop with SmpB. tmRNA is encoded by the ssrA gene; the 2 termini fold to resemble tRNA(Ala) and it encodes a 'tag peptide', a short internal open reading frame. During trans-translation Ala-aminoacylated tmRNA acts like a tRNA, entering the A-site of stalled ribosomes, displacing the stalled mRNA. The ribosome then switches to translate the ORF on the tmRNA; the nascent peptide is terminated with the 'tag peptide' encoded by the tmRNA and targeted for degradation. The ribosome is freed to recommence translation, which seems to be the essential function of trans-translation. The polypeptide is SsrA-binding protein (Xylella fastidiosa (strain M12)).